Here is a 486-residue protein sequence, read N- to C-terminus: Protein nucleotidyltransferase YdiU (486 aa).

Positions 90, 92, 93, 113, 125, 126, 176, and 183 each coordinate ATP. The active-site Proton acceptor is the Asp-252. Mg(2+) contacts are provided by Asn-253 and Asp-262. Position 262 (Asp-262) interacts with ATP.

The protein belongs to the SELO family. Mg(2+) serves as cofactor. Mn(2+) is required as a cofactor.

The catalysed reaction is L-seryl-[protein] + ATP = 3-O-(5'-adenylyl)-L-seryl-[protein] + diphosphate. The enzyme catalyses L-threonyl-[protein] + ATP = 3-O-(5'-adenylyl)-L-threonyl-[protein] + diphosphate. It catalyses the reaction L-tyrosyl-[protein] + ATP = O-(5'-adenylyl)-L-tyrosyl-[protein] + diphosphate. It carries out the reaction L-histidyl-[protein] + UTP = N(tele)-(5'-uridylyl)-L-histidyl-[protein] + diphosphate. The catalysed reaction is L-seryl-[protein] + UTP = O-(5'-uridylyl)-L-seryl-[protein] + diphosphate. The enzyme catalyses L-tyrosyl-[protein] + UTP = O-(5'-uridylyl)-L-tyrosyl-[protein] + diphosphate. Its function is as follows. Nucleotidyltransferase involved in the post-translational modification of proteins. It can catalyze the addition of adenosine monophosphate (AMP) or uridine monophosphate (UMP) to a protein, resulting in modifications known as AMPylation and UMPylation. This chain is Protein nucleotidyltransferase YdiU, found in Pseudomonas putida (strain ATCC 700007 / DSM 6899 / JCM 31910 / BCRC 17059 / LMG 24140 / F1).